The following is a 359-amino-acid chain: 5-amino-6-(D-ribitylamino)uracil--L-tyrosine 4-hydroxyphenyl transferase (359 aa).

The Radical SAM core domain maps to 45–282 (VTYVVNANIN…TYAISRIFFK (238 aa)). Residues Cys59, Cys63, and Cys66 each coordinate [4Fe-4S] cluster.

This sequence belongs to the radical SAM superfamily. CofH family. In terms of assembly, consists of two subunits, CofG and CofH. [4Fe-4S] cluster is required as a cofactor.

The catalysed reaction is 5-amino-6-(D-ribitylamino)uracil + L-tyrosine + S-adenosyl-L-methionine = 5-amino-5-(4-hydroxybenzyl)-6-(D-ribitylimino)-5,6-dihydrouracil + 2-iminoacetate + 5'-deoxyadenosine + L-methionine + H(+). It functions in the pathway cofactor biosynthesis; coenzyme F0 biosynthesis. Its function is as follows. Catalyzes the radical-mediated synthesis of 5-amino-5-(4-hydroxybenzyl)-6-(D-ribitylimino)-5,6-dihydrouracil from 5-amino-6-(D-ribitylamino)uracil and L-tyrosine. The polypeptide is 5-amino-6-(D-ribitylamino)uracil--L-tyrosine 4-hydroxyphenyl transferase (Methanococcus maripaludis (strain C5 / ATCC BAA-1333)).